A 292-amino-acid polypeptide reads, in one-letter code: 4-hydroxy-tetrahydrodipicolinate synthase (292 aa).

Thr46 provides a ligand contact to pyruvate. The active-site Proton donor/acceptor is the Tyr134. The active-site Schiff-base intermediate with substrate is the Lys162. Ile204 provides a ligand contact to pyruvate.

It belongs to the DapA family. Homotetramer; dimer of dimers.

The protein resides in the cytoplasm. It catalyses the reaction L-aspartate 4-semialdehyde + pyruvate = (2S,4S)-4-hydroxy-2,3,4,5-tetrahydrodipicolinate + H2O + H(+). The protein operates within amino-acid biosynthesis; L-lysine biosynthesis via DAP pathway; (S)-tetrahydrodipicolinate from L-aspartate: step 3/4. Functionally, catalyzes the condensation of (S)-aspartate-beta-semialdehyde [(S)-ASA] and pyruvate to 4-hydroxy-tetrahydrodipicolinate (HTPA). The sequence is that of 4-hydroxy-tetrahydrodipicolinate synthase from Moorella thermoacetica (strain ATCC 39073 / JCM 9320).